Here is a 127-residue protein sequence, read N- to C-terminus: Ribonuclease VapC9 (127 aa).

The PINc domain maps to 2–115 (IVVDASAALA…VTADLRLSDT (114 aa)). 2 residues coordinate Mg(2+): D5 and D91.

This sequence belongs to the PINc/VapC protein family. Mg(2+) serves as cofactor.

In terms of biological role, toxic component of a type II toxin-antitoxin (TA) system. An RNase. The cognate antitoxin is VapB9. The chain is Ribonuclease VapC9 from Mycobacterium tuberculosis (strain CDC 1551 / Oshkosh).